A 529-amino-acid chain; its full sequence is MQQRRPIRRALLSVSDKAGIIEFAQALSQRGIELLSTGGTARLLADAGLPVTEVSDYTGFPEMMDGRVKTLHPKVHGGILGRRGQDDGIMAQHGIQPIDIVVVNLYPFAQTVARPDCSLEDAVENIDIGGPTMVRSAAKNHKDVAIVVKSSDYPAIITELDNNDGSLTYPTRFNLAIKAFEHTAAYDSMIANYFGTLVPPYHGDTEQPSGHFPRTLNLNYIKKQDMRYGENSHQQAAFYIEEDVKEASVATAQQLQGKALSYNNIADTDAALECVKEFSEPACVIVKHANPCGVAIGDSILAAYERAYQTDPTSAFGGIIAFNRELDAATASAIISRQFVEVIIAPTVSSDALALLAAKQNVRVLTCGQWQARSAGLDFKRVNGGLLVQERDLGMVTAADLRVVSKRQPTEQELRDALFCWKVAKFVKSNAIVYARDNMTIGIGAGQMSRVYSAKIAGIKAADEGLEVAGSAMASDAFFPFRDGIDAAAAVGITCVIQPGGSIRDDEVIAAADEHSIAMIFTDMRHFRH.

An MGS-like domain is found at 1–148; that stretch reads MQQRRPIRRA…KNHKDVAIVV (148 aa).

It belongs to the PurH family.

It catalyses the reaction (6R)-10-formyltetrahydrofolate + 5-amino-1-(5-phospho-beta-D-ribosyl)imidazole-4-carboxamide = 5-formamido-1-(5-phospho-D-ribosyl)imidazole-4-carboxamide + (6S)-5,6,7,8-tetrahydrofolate. The enzyme catalyses IMP + H2O = 5-formamido-1-(5-phospho-D-ribosyl)imidazole-4-carboxamide. It functions in the pathway purine metabolism; IMP biosynthesis via de novo pathway; 5-formamido-1-(5-phospho-D-ribosyl)imidazole-4-carboxamide from 5-amino-1-(5-phospho-D-ribosyl)imidazole-4-carboxamide (10-formyl THF route): step 1/1. Its pathway is purine metabolism; IMP biosynthesis via de novo pathway; IMP from 5-formamido-1-(5-phospho-D-ribosyl)imidazole-4-carboxamide: step 1/1. This is Bifunctional purine biosynthesis protein PurH from Yersinia pseudotuberculosis serotype O:1b (strain IP 31758).